We begin with the raw amino-acid sequence, 480 residues long: UDP-N-acetylmuramate--L-alanine ligase (480 aa).

115 to 121 (GTHGKTT) lines the ATP pocket.

It belongs to the MurCDEF family.

The protein resides in the cytoplasm. It catalyses the reaction UDP-N-acetyl-alpha-D-muramate + L-alanine + ATP = UDP-N-acetyl-alpha-D-muramoyl-L-alanine + ADP + phosphate + H(+). It participates in cell wall biogenesis; peptidoglycan biosynthesis. Functionally, cell wall formation. The chain is UDP-N-acetylmuramate--L-alanine ligase from Gluconacetobacter diazotrophicus (strain ATCC 49037 / DSM 5601 / CCUG 37298 / CIP 103539 / LMG 7603 / PAl5).